The chain runs to 39 residues: Omega-theraphotoxin-Ba1a (39 aa).

Disulfide bonds link Cys-4-Cys-25, Cys-8-Cys-31, and Cys-17-Cys-36.

The protein belongs to the neurotoxin 12 (Hwtx-2) family. 06 (TXP1) subfamily. In terms of tissue distribution, expressed by the venom gland.

The protein localises to the secreted. Its function is as follows. Inhibits voltage-gated calcium channels (Cav) in rat cerebellar granule cells. Has insecticidal activity to crickets (Acheta domesticus). Is not toxic to mice. The chain is Omega-theraphotoxin-Ba1a from Brachypelma albiceps (Mexican golden redrump tarantula).